Here is a 168-residue protein sequence, read N- to C-terminus: Lipoprotein signal peptidase (168 aa).

A run of 3 helical transmembrane segments spans residues 6–26 (VLAA…DQIT), 70–90 (WFLA…IAKL), and 98–118 (ALAL…RMLL). Catalysis depends on residues Asp123 and Asp141. The helical transmembrane segment at 139–159 (IADSAICIGAALLVWDSLFGT) threads the bilayer.

This sequence belongs to the peptidase A8 family.

It localises to the cell inner membrane. The catalysed reaction is Release of signal peptides from bacterial membrane prolipoproteins. Hydrolyzes -Xaa-Yaa-Zaa-|-(S,diacylglyceryl)Cys-, in which Xaa is hydrophobic (preferably Leu), and Yaa (Ala or Ser) and Zaa (Gly or Ala) have small, neutral side chains.. It participates in protein modification; lipoprotein biosynthesis (signal peptide cleavage). Functionally, this protein specifically catalyzes the removal of signal peptides from prolipoproteins. This chain is Lipoprotein signal peptidase, found in Teredinibacter turnerae (strain ATCC 39867 / T7901).